Here is a 272-residue protein sequence, read N- to C-terminus: uncharacterized protein (272 aa).

Lys185 (schiff-base intermediate with substrate) is an active-site residue.

It belongs to the DeoC/FbaB aldolase family.

This is an uncharacterized protein from Saccharolobus solfataricus (strain ATCC 35092 / DSM 1617 / JCM 11322 / P2) (Sulfolobus solfataricus).